The following is a 213-amino-acid chain: MQAYQRDFIRFAIERGVLRFGEFTLKSGRTSPYFFNAGLFDSGLALARLGRFYAEAVIDSGIDFDVLFGPAYKGIPLAATTAVALAEQHRRDLPWCFNRKEAKDHGEGGTLVGAPLSGRVLIIDDVITAGTAIREVMQIIDAQGARAAGVLIALNRQERGKGELSAIQEVERDFGMPVVSIVSLEQVLEYLAGDAELKKHLPAVEAYRAQYGI.

Lys-26 serves as a coordination point for 5-phospho-alpha-D-ribose 1-diphosphate. Phe-34–Phe-35 provides a ligand contact to orotate. 5-phospho-alpha-D-ribose 1-diphosphate-binding positions include Tyr-72–Lys-73, Arg-99, Lys-100, Lys-103, His-105, and Asp-124–Ala-132. Residues Thr-128 and Arg-156 each contribute to the orotate site.

This sequence belongs to the purine/pyrimidine phosphoribosyltransferase family. PyrE subfamily. As to quaternary structure, homodimer. It depends on Mg(2+) as a cofactor.

The enzyme catalyses orotidine 5'-phosphate + diphosphate = orotate + 5-phospho-alpha-D-ribose 1-diphosphate. Its pathway is pyrimidine metabolism; UMP biosynthesis via de novo pathway; UMP from orotate: step 1/2. Functionally, catalyzes the transfer of a ribosyl phosphate group from 5-phosphoribose 1-diphosphate to orotate, leading to the formation of orotidine monophosphate (OMP). The protein is Orotate phosphoribosyltransferase of Pseudomonas paraeruginosa (strain DSM 24068 / PA7) (Pseudomonas aeruginosa (strain PA7)).